A 419-amino-acid chain; its full sequence is Gamma-glutamyl phosphate reductase (419 aa).

Belongs to the gamma-glutamyl phosphate reductase family.

The protein localises to the cytoplasm. The catalysed reaction is L-glutamate 5-semialdehyde + phosphate + NADP(+) = L-glutamyl 5-phosphate + NADPH + H(+). The protein operates within amino-acid biosynthesis; L-proline biosynthesis; L-glutamate 5-semialdehyde from L-glutamate: step 2/2. Its function is as follows. Catalyzes the NADPH-dependent reduction of L-glutamate 5-phosphate into L-glutamate 5-semialdehyde and phosphate. The product spontaneously undergoes cyclization to form 1-pyrroline-5-carboxylate. The protein is Gamma-glutamyl phosphate reductase of Mannheimia succiniciproducens (strain KCTC 0769BP / MBEL55E).